The chain runs to 1046 residues: Translation initiation factor IF-2 (1046 aa).

The segment at 49-448 (EAFPAEGSAP…MGAMVPRGNG (400 aa)) is disordered. Residues 52–71 (PAEGSAPSSRPGGRPGNGAR) show a composition bias toward low complexity. Pro residues predominate over residues 94 to 111 (RPGPGGRPVPGRPGPAPL). 2 stretches are compositionally biased toward low complexity: residues 112–139 (PGAS…SQPV) and 147–159 (PRPA…AAAP). Residues 160-176 (APAPSAPAPAPSAPAPA) show a composition bias toward pro residues. Over residues 177-187 (PITSAPTAATP) the composition is skewed to low complexity. Pro residues predominate over residues 188–206 (PAAPQRPTPGGPRPGPAAP). Gly residues predominate over residues 210–222 (RTGGPGGPGGPGG). The segment covering 223-235 (GPRPGPRPGPRPA) has biased composition (pro residues). The segment covering 244–253 (SPAAGPRAAS) has biased composition (low complexity). Pro residues-rich tracts occupy residues 260 to 281 (SAPP…PRPG) and 304 to 314 (RPTPGQMPPRP). Low complexity predominate over residues 320–333 (PRPNSNMFQPRPAG). Residues 334–414 (GAPGRPGGGG…AGAFGPGGRG (81 aa)) show a composition bias toward gly residues. Basic residues predominate over residues 415-426 (RPGRQRKSKRAK). A tr-type G domain is found at 539 to 711 (ARPPVVTVMG…VILTADASLD (173 aa)). The segment at 548 to 555 (GHVDHGKT) is G1. Position 548-555 (548-555 (GHVDHGKT)) interacts with GTP. Residues 573-577 (GITQH) form a G2 region. A G3 region spans residues 598 to 601 (DTPG). GTP-binding positions include 598-602 (DTPGH) and 652-655 (NKVD). A G4 region spans residues 652-655 (NKVD). The tract at residues 688–690 (SAR) is G5.

Belongs to the TRAFAC class translation factor GTPase superfamily. Classic translation factor GTPase family. IF-2 subfamily.

The protein localises to the cytoplasm. One of the essential components for the initiation of protein synthesis. Protects formylmethionyl-tRNA from spontaneous hydrolysis and promotes its binding to the 30S ribosomal subunits. Also involved in the hydrolysis of GTP during the formation of the 70S ribosomal complex. This is Translation initiation factor IF-2 from Parafrankia sp. (strain EAN1pec).